Here is a 106-residue protein sequence, read N- to C-terminus: Nucleoid-associated protein Rpal_0620 (106 aa).

Belongs to the YbaB/EbfC family. In terms of assembly, homodimer.

The protein localises to the cytoplasm. The protein resides in the nucleoid. Binds to DNA and alters its conformation. May be involved in regulation of gene expression, nucleoid organization and DNA protection. The polypeptide is Nucleoid-associated protein Rpal_0620 (Rhodopseudomonas palustris (strain TIE-1)).